A 289-amino-acid chain; its full sequence is uncharacterized protein (289 aa).

An HTH lysR-type domain is found at 1–58 (MDEKDWILLKILHEEQSVTKTAERLFTSQPSITYRLKKIEEIFGIELFTKRHKGITFT). A DNA-binding region (H-T-H motif) is located at residues 18 to 37 (VTKTAERLFTSQPSITYRLK).

Belongs to the LysR transcriptional regulatory family.

This is an uncharacterized protein from Bacillus subtilis (strain 168).